Here is a 280-residue protein sequence, read N- to C-terminus: Dermonecrotic toxin LgSicTox-alphaIA1 (280 aa).

Residue histidine 12 is part of the active site. Mg(2+)-binding residues include glutamate 32 and aspartate 34. Catalysis depends on histidine 48, which acts as the Nucleophile. A disulfide bridge connects residues cysteine 52 and cysteine 58. Aspartate 92 contacts Mg(2+).

Belongs to the arthropod phospholipase D family. Class I subfamily. The cofactor is Mg(2+). As to expression, expressed by the venom gland.

It is found in the secreted. The enzyme catalyses an N-(acyl)-sphingosylphosphocholine = an N-(acyl)-sphingosyl-1,3-cyclic phosphate + choline. It carries out the reaction an N-(acyl)-sphingosylphosphoethanolamine = an N-(acyl)-sphingosyl-1,3-cyclic phosphate + ethanolamine. It catalyses the reaction a 1-acyl-sn-glycero-3-phosphocholine = a 1-acyl-sn-glycero-2,3-cyclic phosphate + choline. The catalysed reaction is a 1-acyl-sn-glycero-3-phosphoethanolamine = a 1-acyl-sn-glycero-2,3-cyclic phosphate + ethanolamine. Its function is as follows. Dermonecrotic toxins cleave the phosphodiester linkage between the phosphate and headgroup of certain phospholipids (sphingolipid and lysolipid substrates), forming an alcohol (often choline) and a cyclic phosphate. This toxin acts on sphingomyelin (SM). It may also act on ceramide phosphoethanolamine (CPE), lysophosphatidylcholine (LPC) and lysophosphatidylethanolamine (LPE), but not on lysophosphatidylserine (LPS), and lysophosphatidylglycerol (LPG). It acts by transphosphatidylation, releasing exclusively cyclic phosphate products as second products. Induces dermonecrosis, hemolysis, increased vascular permeability, edema, inflammatory response, and platelet aggregation. This is Dermonecrotic toxin LgSicTox-alphaIA1 from Loxosceles gaucho (Spider).